A 636-amino-acid polypeptide reads, in one-letter code: 1-deoxy-D-xylulose-5-phosphate synthase (636 aa).

Residues histidine 77 and 118–120 (GHS) contribute to the thiamine diphosphate site. Aspartate 149 contributes to the Mg(2+) binding site. Thiamine diphosphate-binding positions include 150-151 (GA), asparagine 178, tyrosine 290, and glutamate 375. Mg(2+) is bound at residue asparagine 178.

It belongs to the transketolase family. DXPS subfamily. In terms of assembly, homodimer. Mg(2+) is required as a cofactor. The cofactor is thiamine diphosphate.

It carries out the reaction D-glyceraldehyde 3-phosphate + pyruvate + H(+) = 1-deoxy-D-xylulose 5-phosphate + CO2. It functions in the pathway metabolic intermediate biosynthesis; 1-deoxy-D-xylulose 5-phosphate biosynthesis; 1-deoxy-D-xylulose 5-phosphate from D-glyceraldehyde 3-phosphate and pyruvate: step 1/1. Its function is as follows. Catalyzes the acyloin condensation reaction between C atoms 2 and 3 of pyruvate and glyceraldehyde 3-phosphate to yield 1-deoxy-D-xylulose-5-phosphate (DXP). This Cytophaga hutchinsonii (strain ATCC 33406 / DSM 1761 / CIP 103989 / NBRC 15051 / NCIMB 9469 / D465) protein is 1-deoxy-D-xylulose-5-phosphate synthase.